A 438-amino-acid polypeptide reads, in one-letter code: Aminopeptidase E (438 aa).

Residues cysteine 70, histidine 362, and asparagine 383 contribute to the active site.

The protein belongs to the peptidase C1 family.

The protein localises to the cytoplasm. Can hydrolyze internal peptide bonds in Met-enkephalin and bradykinin; however, hydrolysis of alpha-, beta-, and kappa-caseins is not detected. The protein is Aminopeptidase E (pepE) of Lactobacillus helveticus (Lactobacillus suntoryeus).